A 407-amino-acid polypeptide reads, in one-letter code: Succinyl-diaminopimelate desuccinylase (407 aa).

Polar residues predominate over residues 1–10 (MSDIDNNLTS). Residues 1–20 (MSDIDNNLTSQTHQQATHQQ) form a disordered region. Over residues 11-20 (QTHQQATHQQ) the composition is skewed to low complexity. Residue H93 participates in Zn(2+) binding. D95 is a catalytic residue. D126 contributes to the Zn(2+) binding site. Catalysis depends on E160, which acts as the Proton acceptor. E161, E189, and H379 together coordinate Zn(2+).

Belongs to the peptidase M20A family. DapE subfamily. As to quaternary structure, homodimer. Requires Zn(2+) as cofactor. It depends on Co(2+) as a cofactor.

The catalysed reaction is N-succinyl-(2S,6S)-2,6-diaminopimelate + H2O = (2S,6S)-2,6-diaminopimelate + succinate. Its pathway is amino-acid biosynthesis; L-lysine biosynthesis via DAP pathway; LL-2,6-diaminopimelate from (S)-tetrahydrodipicolinate (succinylase route): step 3/3. In terms of biological role, catalyzes the hydrolysis of N-succinyl-L,L-diaminopimelic acid (SDAP), forming succinate and LL-2,6-diaminopimelate (DAP), an intermediate involved in the bacterial biosynthesis of lysine and meso-diaminopimelic acid, an essential component of bacterial cell walls. This Psychrobacter arcticus (strain DSM 17307 / VKM B-2377 / 273-4) protein is Succinyl-diaminopimelate desuccinylase.